The chain runs to 462 residues: DNA polymerase delta subunit 3 (462 aa).

An N-acetylalanine modification is found at alanine 2. Disordered stretches follow at residues 144–186 (APAE…ASQQ), 200–230 (TKTQ…PGKG), 254–384 (AVKE…RVLK), and 403–462 (SESC…FQKK). The segment covering 156-174 (QSNLQAASEAQASELTTNG) has biased composition (polar residues). The span at 204 to 215 (DTNKETKPEARE) shows a compositional bias: basic and acidic residues. The segment covering 218-230 (SASSAGGKAPGKG) has biased composition (low complexity). Residue lysine 256 forms a Glycyl lysine isopeptide (Lys-Gly) (interchain with G-Cter in SUMO); alternate linkage. Lysine 256 participates in a covalent cross-link: Glycyl lysine isopeptide (Lys-Gly) (interchain with G-Cter in SUMO2); alternate. Lysine 259 is covalently cross-linked (Glycyl lysine isopeptide (Lys-Gly) (interchain with G-Cter in SUMO2)). The segment covering 284 to 305 (RKSEPGKVQQKEKSSRGKRVDL) has biased composition (basic and acidic residues). The residue at position 306 (serine 306) is a Phosphoserine. The span at 330 to 344 (SSEDEVFEDSPEMYE) shows a compositional bias: acidic residues. The segment covering 348 to 368 (PSPPPVSPPPDPMPKTEPPPV) has biased composition (pro residues). A phosphoserine mark is found at serine 403 and serine 405. Residue threonine 407 is modified to Phosphothreonine. Serine 409 bears the Phosphoserine mark. Residues 416-427 (KPASAHKPPAAA) show a composition bias toward low complexity. The span at 428-437 (VKREPREERK) shows a compositional bias: basic and acidic residues. Residue lysine 429 forms a Glycyl lysine isopeptide (Lys-Gly) (interchain with G-Cter in SUMO); alternate linkage. Lysine 429 is covalently cross-linked (Glycyl lysine isopeptide (Lys-Gly) (interchain with G-Cter in SUMO2); alternate). Over residues 451–462 (RQVSITGFFQKK) the composition is skewed to polar residues. A PIP-box motif is present at residues 452-459 (QVSITGFF). Serine 454 carries the post-translational modification Phosphoserine.

As to quaternary structure, component of both the DNA polymerase delta and DNA polymerase zeta complexes. The tetrameric DNA polymerase delta complex (Pol-delta4), which consists of POLD1/p125, POLD2/p50, POLD3/p66/p68 and POLD4/p12, with POLD1 bearing DNA polymerase and 3' to 5' proofreading exonuclease activities. Within this complex, directly interacts with POLD2. Following stress caused by DNA damaging agents or by replication stress, POLD4 is degraded and Pol-delta4 is converted into a trimeric form of the complex (Pol-delta3), which consists of POLD1, POLD2 and POLD3. Pol-delta3 is the major form occurring at S phase replication sites, as well as DNA damage sites. Directly interacts with PCNA, as do POLD1 and POLD4; this interaction stimulates Pol-delta polymerase activity. POLD3 phosphorylation at Ser-454 impairs PCNA binding. Component of the DNA polymerase zeta complex (POLZ), which consists of REV3L, MAD2L2, POLD2 and POLD3, with REV3L bearing DNA polymerase catalytic activity. The DNA polymerase delta complex interacts with POLDIP2; this interaction is probably mediated through direct binding to POLD2. Ubiquitinated, but not targeted to the proteasome. Sumoylated. Sumoylation by SUMO3 may be predominant. Post-translationally, phosphorylation at Ser-454 is thought to decrease the affinity for PCNA and Pol-delta4 processivity. May be phosphorylated by CDK1-cyclin-A complex, as well as CDK2-cyclin-A and CDK2-cyclin-E complexes. PCNA interferes with CDK-cyclin phosphorylation.

Its subcellular location is the cytoplasm. It localises to the nucleus. In terms of biological role, accessory component of both the DNA polymerase delta complex and the DNA polymerase zeta complex. As a component of the trimeric and tetrameric DNA polymerase delta complexes (Pol-delta3 and Pol-delta4, respectively), plays a role in high fidelity genome replication, including in lagging strand synthesis, and repair. Required for optimal Pol-delta activity. Stabilizes the Pol-delta complex and plays a major role in Pol-delta stimulation by PCNA. Pol-delta3 and Pol-delta4 are characterized by the absence or the presence of POLD4. They exhibit differences in catalytic activity. Most notably, Pol-delta3 shows higher proofreading activity than Pol-delta4. Although both Pol-delta3 and Pol-delta4 process Okazaki fragments in vitro, Pol-delta3 may also be better suited to fulfill this task, exhibiting near-absence of strand displacement activity compared to Pol-delta4 and stalling on encounter with the 5'-blocking oligonucleotides. Pol-delta3 idling process may avoid the formation of a gap, while maintaining a nick that can be readily ligated. Along with DNA polymerase kappa, DNA polymerase delta carries out approximately half of nucleotide excision repair (NER) synthesis following UV irradiation. In this context, POLD3, along with PCNA and RFC1-replication factor C complex, is required to recruit POLD1, the catalytic subunit of the polymerase delta complex, to DNA damage sites. Under conditions of DNA replication stress, required for the repair of broken replication forks through break-induced replication (BIR). Involved in the translesion synthesis (TLS) of templates carrying O6-methylguanine or abasic sites performed by Pol-delta4, independently of DNA polymerase zeta (REV3L) or eta (POLH). Facilitates abasic site bypass by DNA polymerase delta by promoting extension from the nucleotide inserted opposite the lesion. Also involved in TLS, as a component of the tetrameric DNA polymerase zeta complex. Along with POLD2, dramatically increases the efficiency and processivity of DNA synthesis of the DNA polymerase zeta complex compared to the minimal zeta complex, consisting of only REV3L and REV7. This chain is DNA polymerase delta subunit 3 (Pold3), found in Mus musculus (Mouse).